A 204-amino-acid polypeptide reads, in one-letter code: Dephospho-CoA kinase (204 aa).

The DPCK domain occupies R13 to V204. A21–T26 provides a ligand contact to ATP.

It belongs to the CoaE family.

Its subcellular location is the cytoplasm. The enzyme catalyses 3'-dephospho-CoA + ATP = ADP + CoA + H(+). It functions in the pathway cofactor biosynthesis; coenzyme A biosynthesis; CoA from (R)-pantothenate: step 5/5. In terms of biological role, catalyzes the phosphorylation of the 3'-hydroxyl group of dephosphocoenzyme A to form coenzyme A. The polypeptide is Dephospho-CoA kinase (Prochlorococcus marinus subsp. pastoris (strain CCMP1986 / NIES-2087 / MED4)).